Reading from the N-terminus, the 273-residue chain is Ribosomal RNA small subunit methyltransferase A (273 aa).

S-adenosyl-L-methionine is bound by residues Asn-18, Leu-20, Gly-45, Glu-66, Asp-91, and Asn-113.

The protein belongs to the class I-like SAM-binding methyltransferase superfamily. rRNA adenine N(6)-methyltransferase family. RsmA subfamily.

The protein localises to the cytoplasm. The enzyme catalyses adenosine(1518)/adenosine(1519) in 16S rRNA + 4 S-adenosyl-L-methionine = N(6)-dimethyladenosine(1518)/N(6)-dimethyladenosine(1519) in 16S rRNA + 4 S-adenosyl-L-homocysteine + 4 H(+). In terms of biological role, specifically dimethylates two adjacent adenosines (A1518 and A1519) in the loop of a conserved hairpin near the 3'-end of 16S rRNA in the 30S particle. May play a critical role in biogenesis of 30S subunits. The polypeptide is Ribosomal RNA small subunit methyltransferase A (Salmonella agona (strain SL483)).